The chain runs to 137 residues: Small ribosomal subunit protein uS12 (137 aa).

The tract at residues Lys-33–Lys-57 is disordered. Residue Asp-102 is modified to 3-methylthioaspartic acid.

The protein belongs to the universal ribosomal protein uS12 family. In terms of assembly, part of the 30S ribosomal subunit. Contacts proteins S8 and S17. May interact with IF1 in the 30S initiation complex.

Its function is as follows. With S4 and S5 plays an important role in translational accuracy. Functionally, interacts with and stabilizes bases of the 16S rRNA that are involved in tRNA selection in the A site and with the mRNA backbone. Located at the interface of the 30S and 50S subunits, it traverses the body of the 30S subunit contacting proteins on the other side and probably holding the rRNA structure together. The combined cluster of proteins S8, S12 and S17 appears to hold together the shoulder and platform of the 30S subunit. The sequence is that of Small ribosomal subunit protein uS12 from Streptococcus thermophilus (strain CNRZ 1066).